The primary structure comprises 168 residues: 3'-5' exoribonuclease MT2234.1 (168 aa).

Aspartate 6 lines the Mg(2+) pocket. Residues 6-9 are RNA binding; the sequence is DTEF.

Homodimer. Mg(2+) serves as cofactor.

Functionally, exonuclease that cleaves single-stranded 3' overhangs of double-stranded RNA. The protein is 3'-5' exoribonuclease MT2234.1 of Mycobacterium tuberculosis (strain CDC 1551 / Oshkosh).